A 151-amino-acid polypeptide reads, in one-letter code: Probable flavodoxin 2 (151 aa).

In terms of domain architecture, Flavodoxin-like spans 4-144 (ILLVYATMSG…ELINFGRQFA (141 aa)). Residues 10–14 (TMSGN) and 88–119 (VFGSGDTAYEFFCGAVDTLEAKIKERGGDIVL) each bind FMN.

It belongs to the flavodoxin family. The cofactor is FMN.

Low-potential electron donor to a number of redox enzymes. In Bacillus subtilis (strain 168), this protein is Probable flavodoxin 2 (ykuP).